A 369-amino-acid chain; its full sequence is Chorismate synthase (369 aa).

Residues Arg-48 and Arg-54 each coordinate NADP(+). Residues 125-127 (RSS), 238-239 (NA), Gly-278, 293-297 (KPTSS), and Arg-319 each bind FMN.

Belongs to the chorismate synthase family. As to quaternary structure, homotetramer. The cofactor is FMNH2.

It carries out the reaction 5-O-(1-carboxyvinyl)-3-phosphoshikimate = chorismate + phosphate. The protein operates within metabolic intermediate biosynthesis; chorismate biosynthesis; chorismate from D-erythrose 4-phosphate and phosphoenolpyruvate: step 7/7. In terms of biological role, catalyzes the anti-1,4-elimination of the C-3 phosphate and the C-6 proR hydrogen from 5-enolpyruvylshikimate-3-phosphate (EPSP) to yield chorismate, which is the branch point compound that serves as the starting substrate for the three terminal pathways of aromatic amino acid biosynthesis. This reaction introduces a second double bond into the aromatic ring system. The protein is Chorismate synthase of Burkholderia mallei (strain ATCC 23344).